The following is a 302-amino-acid chain: Melibiose operon regulatory protein (302 aa).

One can recognise an HTH araC/xylS-type domain in the interval 194 to 292 (SQMLGFIAEN…GMSPQQYRKL (99 aa)). DNA-binding regions (H-T-H motif) lie at residues 211 to 232 (NDVAEHVKLNANYAMGIFQRVM) and 259 to 282 (ILDIALTAGFRSSSRFYSTFGKYV).

In terms of biological role, transcription activator for the expression of the melAB operon. MelR binds at two sites located upstream of the melAB transcription site. The chain is Melibiose operon regulatory protein (melR) from Escherichia coli O6:H1 (strain CFT073 / ATCC 700928 / UPEC).